Here is a 380-residue protein sequence, read N- to C-terminus: Cytochrome b (380 aa).

4 consecutive transmembrane segments (helical) span residues 34–54, 78–99, 114–134, and 179–199; these read FGSLLGICLLTQILTGLLLAT, WLIRNLHANGASFFFICIYLHI, WNTGVILLLTLMATAFVGYVL, and FFALHFLLPFMIAGLALIHLT. 2 residues coordinate heme b: His-84 and His-98. Positions 183 and 197 each coordinate heme b. Residue His-202 coordinates a ubiquinone. 4 helical membrane-spanning segments follow: residues 227–247, 289–309, 321–341, and 348–368; these read LKDILGFIIMFLPLTTLALFS, LGGVLALAASVLVLFLTPLLH, LSQLLFWTLVTNLCILTWVGS, and FIIIGQLASLTYFTILLLLFP.

The protein belongs to the cytochrome b family. The cytochrome bc1 complex contains 11 subunits: 3 respiratory subunits (MT-CYB, CYC1 and UQCRFS1), 2 core proteins (UQCRC1 and UQCRC2) and 6 low-molecular weight proteins (UQCRH/QCR6, UQCRB/QCR7, UQCRQ/QCR8, UQCR10/QCR9, UQCR11/QCR10 and a cleavage product of UQCRFS1). This cytochrome bc1 complex then forms a dimer. It depends on heme b as a cofactor.

It localises to the mitochondrion inner membrane. Its function is as follows. Component of the ubiquinol-cytochrome c reductase complex (complex III or cytochrome b-c1 complex) that is part of the mitochondrial respiratory chain. The b-c1 complex mediates electron transfer from ubiquinol to cytochrome c. Contributes to the generation of a proton gradient across the mitochondrial membrane that is then used for ATP synthesis. The protein is Cytochrome b (MT-CYB) of Cepphus grylle (Black guillemot).